The following is a 147-amino-acid chain: Sentan (147 aa).

Positions 1 to 32 (MGGCMHSTQDKSLHLEGDPNPSAAPTSTCAPR) are disordered. Basic and acidic residues predominate over residues 8–17 (TQDKSLHLEG).

Belongs to the S-100 family.

The protein resides in the cell projection. Its subcellular location is the cilium. Its function is as follows. May be a component of the linker structure that bridges the ciliary membrane and peripheral singlet microtubules. This is Sentan (SNTN) from Homo sapiens (Human).